A 714-amino-acid polypeptide reads, in one-letter code: Phosphate acetyltransferase (714 aa).

The segment at 391-714 (AFRYQLTELA…LTAIQSAQQQ (324 aa)) is phosphate acetyltransferase.

It in the N-terminal section; belongs to the CobB/CobQ family. This sequence in the C-terminal section; belongs to the phosphate acetyltransferase and butyryltransferase family. Homohexamer.

The protein resides in the cytoplasm. The catalysed reaction is acetyl-CoA + phosphate = acetyl phosphate + CoA. The protein operates within metabolic intermediate biosynthesis; acetyl-CoA biosynthesis; acetyl-CoA from acetate: step 2/2. With respect to regulation, inhibited by NADH and ATP. Pyruvate and PEP act as activators of the acetyl phosphate forming reaction while inhibiting the formation of acetyl-CoA. Functionally, involved in acetate metabolism. Catalyzes the reversible interconversion of acetyl-CoA and acetyl phosphate. The direction of the overall reaction changes depending on growth conditions. On minimal medium acetyl-CoA is generated. In rich medium acetyl-CoA is converted to acetate and allowing the cell to dump the excess of acetylation potential in exchange for energy in the form of ATP. The main pathway for acetate production during exponential phase. The polypeptide is Phosphate acetyltransferase (pta) (Escherichia coli (strain K12)).